The chain runs to 491 residues: Ketol-acid reductoisomerase (NADP(+)) (491 aa).

The 194-residue stretch at 15–208 (AQLGKCRFMG…GGHRAGVLES (194 aa)) folds into the KARI N-terminal Rossmann domain. NADP(+) is bound by residues 45–48 (CGAQ), Arg-68, Arg-76, Ser-78, and 108–110 (DKQ). The active site involves His-132. Gly-158 is an NADP(+) binding site. 2 consecutive KARI C-terminal knotted domains span residues 209 to 344 (SFVA…TAPQ) and 345 to 484 (YEGK…MTDM). Residues Asp-217, Glu-221, Glu-389, and Glu-393 each coordinate Mg(2+). Position 414 (Ser-414) interacts with substrate.

It belongs to the ketol-acid reductoisomerase family. The cofactor is Mg(2+).

It catalyses the reaction (2R)-2,3-dihydroxy-3-methylbutanoate + NADP(+) = (2S)-2-acetolactate + NADPH + H(+). The enzyme catalyses (2R,3R)-2,3-dihydroxy-3-methylpentanoate + NADP(+) = (S)-2-ethyl-2-hydroxy-3-oxobutanoate + NADPH + H(+). The protein operates within amino-acid biosynthesis; L-isoleucine biosynthesis; L-isoleucine from 2-oxobutanoate: step 2/4. Its pathway is amino-acid biosynthesis; L-valine biosynthesis; L-valine from pyruvate: step 2/4. Its function is as follows. Involved in the biosynthesis of branched-chain amino acids (BCAA). Catalyzes an alkyl-migration followed by a ketol-acid reduction of (S)-2-acetolactate (S2AL) to yield (R)-2,3-dihydroxy-isovalerate. In the isomerase reaction, S2AL is rearranged via a Mg-dependent methyl migration to produce 3-hydroxy-3-methyl-2-ketobutyrate (HMKB). In the reductase reaction, this 2-ketoacid undergoes a metal-dependent reduction by NADPH to yield (R)-2,3-dihydroxy-isovalerate. The polypeptide is Ketol-acid reductoisomerase (NADP(+)) (Escherichia coli O6:K15:H31 (strain 536 / UPEC)).